The following is a 1794-amino-acid chain: Non-reducing polyketide synthase nscA (1794 aa).

The N-terminal acylcarrier protein transacylase domain (SAT) stretch occupies residues 19 to 256 (DLKDLFRRLH…PLPVYDGLCH (238 aa)). Residues 389–822 (ASKLAIVGMA…GGNTTVLLED (434 aa)) form the Ketosynthase family 3 (KS3) domain. Positions 427 to 448 (PDRFDLNTHYDPTGKTENATQT) are disordered. Residues 428 to 440 (DRFDLNTHYDPTG) show a composition bias toward basic and acidic residues. Active-site for beta-ketoacyl synthase activity residues include C562, H697, and H740. Positions 928–1249 (FTGQGAYYSG…LVTLHLAGLT (322 aa)) are malonyl-CoA:ACP transacylase (MAT) domain. The interval 1314 to 1633 (TSLVHQITAE…RLLMDRFFSP (320 aa)) is product template (PT) domain. The segment at 1318 to 1454 (HQITAETVEA…GVVRFEDPAA (137 aa)) is N-terminal hotdog fold. The region spanning 1318-1628 (HQITAETVEA…FRRVPRLLMD (311 aa)) is the PKS/mFAS DH domain. H1350 (proton acceptor; for dehydratase activity) is an active-site residue. The interval 1482-1628 (ASKLSKPLAY…FRRVPRLLMD (147 aa)) is C-terminal hotdog fold. Residue D1539 is the Proton donor; for dehydratase activity of the active site. Disordered regions lie at residues 1637–1665 (SHAE…EAPA) and 1682–1718 (ASKS…GDPV). Polar residues-rich tracts occupy residues 1644 to 1655 (QETAPSATSVKK) and 1685 to 1701 (SEVS…QESP). The Carrier domain occupies 1717-1794 (PVDAGVVGQC…EMTAWLEEYC (78 aa)). S1754 carries the post-translational modification O-(pantetheine 4'-phosphoryl)serine.

The cofactor is pantetheine 4'-phosphate.

The protein operates within secondary metabolite biosynthesis. Functionally, non-reducing polyketide synthase; part of the gene cluster that mediates the biosynthesis of neosartoricin, a prenylated anthracenone that exhibits T-cell antiproliferative activity, suggestive of a physiological role as an immunosuppressive agent. The non-reducing polyketide synthase nscA probably synthesizes and cyclizes the decaketide backbone. The hydrolase nscB then mediates the product release through hydrolysis followed by spontaneous decarboxylation. The prenyltransferase nscD catalyzes the addition of the dimethylallyl group to the aromatic C5. The FAD-dependent monooxygenase nscC is then responsible for the stereospecific hydroxylation at C2. There is no gene encoding O-acetyltransferase in the nsc gene cluster; thus, the last step of 2-O-acetylation leading to neosartoricin may be catalyzed by an unidentified O-acetyltransferase. The sequence is that of Non-reducing polyketide synthase nscA from Neosartorya fischeri (strain ATCC 1020 / DSM 3700 / CBS 544.65 / FGSC A1164 / JCM 1740 / NRRL 181 / WB 181) (Aspergillus fischerianus).